We begin with the raw amino-acid sequence, 98 residues long: DNA/RNA-binding protein Alba (98 aa).

At Lys16 the chain carries N6-acetyllysine.

It belongs to the histone-like Alba family. Post-translationally, acetylated. Acetylation at Lys-16 decreases DNA-binding affinity.

Its subcellular location is the cytoplasm. The protein resides in the chromosome. In terms of biological role, binds double-stranded DNA tightly but without sequence specificity. Involved in DNA compaction. This is DNA/RNA-binding protein Alba from Metallosphaera sedula (strain ATCC 51363 / DSM 5348 / JCM 9185 / NBRC 15509 / TH2).